The sequence spans 363 residues: Transcription factor PIF6 (363 aa).

Disordered stretches follow at residues 154–204 (SEGS…RNDI) and 340–363 (IPNP…KTNR). Residues 178 to 188 (RTRKALVKRKR) show a composition bias toward basic residues. The region spanning 188–237 (RNAEAYNSPERNQRNDINKKMRTLQNLLPNSHKDDNESMLDEAINYMTNL) is the bHLH domain. Residues 340-350 (IPNPNSLSNLD) show a composition bias toward polar residues. A compositionally biased stretch (basic residues) spans 354-363 (LHKKSRKTNR).

In terms of assembly, homodimer. Interacts with APRR1/TOC1. Binds to RGL2 and RGA. Associates to PTAC12/HMR/PAP5 which acts as a transcriptional coactivator. In terms of tissue distribution, mainly expressed in fruits and flowers and, to a lower extent, in leaves, stems, seedlings and roots.

The protein resides in the nucleus. In terms of biological role, transcription factor. In Arabidopsis thaliana (Mouse-ear cress), this protein is Transcription factor PIF6.